The following is a 250-amino-acid chain: 26 kDa periplasmic immunogenic protein (250 aa).

An N-terminal signal peptide occupies residues 1–28; that stretch reads MNTRASNFLAASFSTIMLVGAFSLPAFA.

Its subcellular location is the periplasm. The protein is 26 kDa periplasmic immunogenic protein (bp26) of Brucella abortus (strain S19).